A 233-amino-acid chain; its full sequence is uncharacterized protein (233 aa).

This is an uncharacterized protein from Bacillus subtilis (strain 168).